A 334-amino-acid chain; its full sequence is HTH-type transcriptional repressor PurR (334 aa).

An HTH lacI-type domain is found at alanine 2 to cysteine 56. The H-T-H motif DNA-binding region spans isoleucine 4–asparagine 23. A DNA-binding region spans residues serine 48 to cysteine 56. Hypoxanthine is bound by residues phenylalanine 73, lysine 189, phenylalanine 220, and aspartate 274.

Homodimer.

Its pathway is purine metabolism; purine nucleotide biosynthesis [regulation]. Functionally, is the main repressor of the genes involved in the de novo synthesis of purine nucleotides, regulating purB, purC, purEK, purF, purHD, purL, purMN and guaBA expression. PurR is allosterically activated to bind its cognate DNA by binding the purine corepressors, hypoxanthine or guanine, thereby effecting transcription repression. This chain is HTH-type transcriptional repressor PurR, found in Vibrio atlanticus (strain LGP32) (Vibrio splendidus (strain Mel32)).